We begin with the raw amino-acid sequence, 59 residues long: MSAEVKVTLVRSHIGKSTSVKAVLNGLGLTKRQKTVTLKDSPEVRGMINKVSHLLKVDE.

It belongs to the universal ribosomal protein uL30 family. As to quaternary structure, part of the 50S ribosomal subunit.

This chain is Large ribosomal subunit protein uL30, found in Geotalea daltonii (strain DSM 22248 / JCM 15807 / FRC-32) (Geobacter daltonii).